The chain runs to 423 residues: Transcription factor AP-2-epsilon (423 aa).

The disordered stretch occupies residues Met-1–His-108. A compositionally biased stretch (low complexity) spans Gly-14–Leu-27. The PPxY motif motif lies at Tyr-50–Tyr-55. A compositionally biased stretch (low complexity) spans Gln-57–Tyr-70. A compositionally biased stretch (polar residues) spans Ser-79–Ser-93. The interval Arg-276 to Asp-405 is H-S-H (helix-span-helix), dimerization.

It belongs to the AP-2 family. As to quaternary structure, binds DNA as a dimer. Can form homodimers or heterodimers with other AP-2 family members.

It is found in the nucleus. Sequence-specific DNA-binding protein that interacts with inducible viral and cellular enhancer elements to regulate transcription of selected genes. AP-2 factors bind to the consensus sequence 5'-GCCNNNGGC-3' and activate genes involved in a large spectrum of important biological functions. This chain is Transcription factor AP-2-epsilon, found in Danio rerio (Zebrafish).